A 494-amino-acid chain; its full sequence is WD repeat-containing protein 37 (494 aa).

The interval 1 to 38 (MPTESGSWAAARQTKQKRKSHSLSIKRTNSSEQDRPGL) is disordered. Residues 22–31 (SLSIKRTNSS) show a composition bias toward polar residues. 2 WD repeats span residues 154 to 194 (GHRD…CLIK) and 197 to 236 (GHAGSVNSIKFHPTEQIALTASGDQTAHIWRYMVQLPTPQ). A disordered region spans residues 236 to 266 (QPTADTSISGEEEVDFSDKDENDGDGDASSD). Acidic residues predominate over residues 245 to 263 (GEEEVDFSDKDENDGDGDA). 5 WD repeats span residues 279-318 (SHQGVVIAADWLVGGKQAVTASWDRTANLYDVETSELVHS), 321-360 (GHDQELTHCCTHPTQRLVVTSSRDTTFRLWDFRDPSIHSV), 365-403 (GHTDTVTSAVFTVGDNVVSGSDDRTVKVWDLKNMRSPIA), 406-445 (RTDSAINRISVSVGQRIIALPHDNRQVRLFDMSGVRLARL), and 452-493 (GHRR…LLQE).

It localises to the cytoplasm. The protein localises to the nucleus. This chain is WD repeat-containing protein 37 (wdr37), found in Xenopus tropicalis (Western clawed frog).